A 1399-amino-acid polypeptide reads, in one-letter code: DNA-directed RNA polymerase subunit beta' (1399 aa).

Zn(2+) is bound by residues Cys71, Cys73, Cys86, and Cys89. Residues Asp462, Asp464, and Asp466 each contribute to the Mg(2+) site. Residues Cys810, Cys884, Cys891, and Cys894 each contribute to the Zn(2+) site.

The protein belongs to the RNA polymerase beta' chain family. In terms of assembly, the RNAP catalytic core consists of 2 alpha, 1 beta, 1 beta' and 1 omega subunit. When a sigma factor is associated with the core the holoenzyme is formed, which can initiate transcription. Mg(2+) is required as a cofactor. The cofactor is Zn(2+).

It carries out the reaction RNA(n) + a ribonucleoside 5'-triphosphate = RNA(n+1) + diphosphate. DNA-dependent RNA polymerase catalyzes the transcription of DNA into RNA using the four ribonucleoside triphosphates as substrates. This Chelativorans sp. (strain BNC1) protein is DNA-directed RNA polymerase subunit beta'.